A 247-amino-acid chain; its full sequence is Geranylgeranylglyceryl phosphate synthase (247 aa).

Positions 24 and 53 each coordinate Mg(2+). Sn-glycerol 1-phosphate contacts are provided by residues 172-178 (YLEAGSG), 203-204 (GG), and 225-226 (GT).

The protein belongs to the GGGP/HepGP synthase family. Group II subfamily. Mg(2+) is required as a cofactor.

The protein localises to the cytoplasm. It carries out the reaction sn-glycerol 1-phosphate + (2E,6E,10E)-geranylgeranyl diphosphate = sn-3-O-(geranylgeranyl)glycerol 1-phosphate + diphosphate. Its pathway is membrane lipid metabolism; glycerophospholipid metabolism. Its function is as follows. Prenyltransferase that catalyzes the transfer of the geranylgeranyl moiety of geranylgeranyl diphosphate (GGPP) to the C3 hydroxyl of sn-glycerol-1-phosphate (G1P). This reaction is the first ether-bond-formation step in the biosynthesis of archaeal membrane lipids. The protein is Geranylgeranylglyceryl phosphate synthase of Cenarchaeum symbiosum (strain A).